A 351-amino-acid polypeptide reads, in one-letter code: DNA polymerase IV (351 aa).

The UmuC domain occupies 4–185; it reads IIHVDMDCFF…LPLAKIPGVG (182 aa). Mg(2+) is bound by residues D8 and D103. The active site involves E104.

The protein belongs to the DNA polymerase type-Y family. Monomer. Mg(2+) serves as cofactor.

It is found in the cytoplasm. It catalyses the reaction DNA(n) + a 2'-deoxyribonucleoside 5'-triphosphate = DNA(n+1) + diphosphate. Poorly processive, error-prone DNA polymerase involved in untargeted mutagenesis. Copies undamaged DNA at stalled replication forks, which arise in vivo from mismatched or misaligned primer ends. These misaligned primers can be extended by PolIV. Exhibits no 3'-5' exonuclease (proofreading) activity. May be involved in translesional synthesis, in conjunction with the beta clamp from PolIII. This is DNA polymerase IV from Escherichia coli O139:H28 (strain E24377A / ETEC).